Here is a 490-residue protein sequence, read N- to C-terminus: MSRYGLQKLYINGAYTDSTSGDTFDAVNPANGECIAQLQAANAQDVDKAVAAAKQGQPVWAAMTAMERSRILRRAVDILRDRNDELAAIETADTGKPLSETRSVDIVTGADVLEYYAGLIPALEGQQIPLRGSAFVYTRREPLGVVAGIGAWNYPIQIALWKSAPALAAGNAMIFKPSEVTSLTALKLAEIYTEAGLPAGVFNVLTGSGDQVGQMLTEHPGIAKVSFTGGIASGKKVMANAAGSTLKDVTMELGGKSPLIIFADVDLDKAADIAMMANFYSSGQVCTNGTRVFVPQALQAAFEQKIVERVKRIHIGDPSDERVNFGPLVSFQHRDSVMRYIDSGKREGATLLIGGCSLTEGALAHGAYVAPTVFTHCRDDMQIVREEIFGPVMSILSYQSEEEVIRRANDTEYGLAAGVVTQDLNRAHRVIHQLQAGICWINTWGESAPEMPVGGYKHSGVGRENGISTLEHYTQIKSIQVELGSFNSVF.

A K(+)-binding site is contributed by Asp93. Residue 150-152 (GAW) participates in NAD(+) binding. Residue Lys162 is the Charge relay system of the active site. 176 to 179 (KPSE) is a binding site for NAD(+). Val180 contacts K(+). 230–233 (GIAS) provides a ligand contact to NAD(+). Leu246 contributes to the K(+) binding site. The active-site Proton acceptor is the Glu252. NAD(+)-binding residues include Gly254, Cys286, and Glu387. Cys286 functions as the Nucleophile in the catalytic mechanism. Cys286 bears the Cysteine sulfenic acid (-SOH) mark. K(+)-binding residues include Lys457 and Gly460. The Charge relay system role is filled by Glu464.

It belongs to the aldehyde dehydrogenase family. Dimer of dimers. The cofactor is K(+).

It carries out the reaction betaine aldehyde + NAD(+) + H2O = glycine betaine + NADH + 2 H(+). Its pathway is amine and polyamine biosynthesis; betaine biosynthesis via choline pathway; betaine from betaine aldehyde: step 1/1. Its function is as follows. Involved in the biosynthesis of the osmoprotectant glycine betaine. Catalyzes the irreversible oxidation of betaine aldehyde to the corresponding acid. This Yersinia pseudotuberculosis serotype O:3 (strain YPIII) protein is Betaine aldehyde dehydrogenase.